The primary structure comprises 257 residues: Outer membrane protein YaiO (257 aa).

The N-terminal stretch at 1–19 (MIKRTLLAAAIFSALPAYA) is a signal peptide.

It localises to the cell outer membrane. The polypeptide is Outer membrane protein YaiO (yaiO) (Escherichia coli (strain K12)).